We begin with the raw amino-acid sequence, 175 residues long: EKC/KEOPS complex subunit TPRKB (175 aa).

The protein belongs to the CGI121/TPRKB family. As to quaternary structure, component of the EKC/KEOPS complex.

The protein localises to the cytoplasm. It localises to the cytosol. The protein resides in the nucleus. Functionally, component of the EKC/KEOPS complex that is required for the formation of a threonylcarbamoyl group on adenosine at position 37 (t(6)A37) in tRNAs that read codons beginning with adenine. The complex is probably involved in the transfer of the threonylcarbamoyl moiety of threonylcarbamoyl-AMP (TC-AMP) to the N6 group of A37. Tprkb acts as an allosteric effector that regulates the t(6)A activity of the complex. In Danio rerio (Zebrafish), this protein is EKC/KEOPS complex subunit TPRKB.